The sequence spans 325 residues: Hydroxylase/desaturase poxK (325 aa).

Low complexity predominate over residues Met-1 to Ala-12. Residues Met-1–Lys-25 are disordered.

It belongs to the asaB hydroxylase/desaturase family.

It participates in secondary metabolite biosynthesis. In terms of biological role, hydroxylase/desaturase; part of the gene cluster that mediates the biosynthesis of oxaleimides, cytotoxic compounds containing an unusual disubstituted succinimide moiety. The first step of the pathway is provided by the HR-PKS poxF that serves in a new mode of collaborative biosynthesis with the PKS-NRPS poxE, by providing the olefin containing amino acid substrate via the synthesis of an ACP-bound dec-4-enoate. The cytochrome P450 monooxygenase poxM-catalyzed oxidation at the alpha-position creates the enzyme-bound 2-hydroxydec-4-enoyl-ACP thioester, which may be prone to spontaneous hydrolysis to yield 2-hydroxydec-4-enoic acid due to increased electrophilicity of the carbonyl. 2-hydroxydec-4-enoic acid can then be further oxidized by poxM to yield the alpha-ketoacid 2-oxodec-4-enoicacid, which is reductively aminated by the aminotransferase poxL to yield (S,E)-2-aminodec-4-enoic acid. The Hybrid PKS-NRPS synthetase poxE then performs condensation between the octaketide product of its PKS modules and the amino group of (S,E)-2-aminodec-4-enoic acid which is activated and incorporated by the adenylation domain. The resulting aminoacyl product can be cyclized by the Diels-Alderase PoxQ and reductively released by the reductive (R) domain of poxE to yield an aldehyde intermediate. The released aldehyde is then substrate for a Knoevenagel condensation by the hydrolyase poxO followed by an oxidation at the 5-position of the pyrrolidone ring. The presence of the olefin from the amino acid building block allows for migration of the substituted allyl group to occur. This allylic transposition reaction takes place in a conjugate addition, semipinacol-like fashion to yield a succinimide intermediate. Iterative two-electron oxidations of the C7 methyl of the succinimide intermediate to the carboxylic acid can be catalyzed by one of two remaining cytochrome P450 monooxygenasess poxC or poxD to yield oxaleimide A. Subsequent oxidation yields the maleimide scaffold oxaleimide I. Both oxaleimide A and oxaleimide I can undergo oxidative modifications in the decalin ring to yield the series of products oxaleimides B to H. The sequence is that of Hydroxylase/desaturase poxK from Penicillium oxalicum.